We begin with the raw amino-acid sequence, 62 residues long: Cytotoxin homolog (62 aa).

Intrachain disulfides connect cysteine 3/cysteine 22, cysteine 15/cysteine 40, cysteine 44/cysteine 55, and cysteine 56/cysteine 61.

The protein belongs to the three-finger toxin family. Short-chain subfamily. Orphan group XV sub-subfamily. As to expression, expressed by the venom gland.

It localises to the secreted. The protein localises to the target cell membrane. Its function is as follows. Has low cytotoxic activity. The sequence is that of Cytotoxin homolog from Naja kaouthia (Monocled cobra).